The sequence spans 488 residues: Germacrene A hydroxylase (488 aa).

Over 1-6 the chain is Cytoplasmic; that stretch reads MELSLT. Residues 7–23 traverse the membrane as a helical; Signal-anchor for type II membrane protein segment; the sequence is TSIALATIVLILYKLAT. Residues 24–488 lie on the Lumenal side of the membrane; that stretch reads RPKSNKKRLP…KTELILVPSF (465 aa). N-linked (GlcNAc...) asparagine glycans are attached at residues Asn260 and Asn379. Cys432 is a heme binding site.

This sequence belongs to the cytochrome P450 family. Heme is required as a cofactor.

The protein localises to the endoplasmic reticulum membrane. It localises to the microsome membrane. The catalysed reaction is (+)-(R)-germacrene A + 3 reduced [NADPH--hemoprotein reductase] + 3 O2 = germacra-1(10),4,11(13)-trien-12-oate + 3 oxidized [NADPH--hemoprotein reductase] + 4 H2O + 4 H(+). It functions in the pathway secondary metabolite biosynthesis; terpenoid biosynthesis. With respect to regulation, inhibited by cytochrome C, miconazole, aminobenzotriazole, metyrapone and clotrimazole. Involved in the biosynthesis of germacrene-derived sesquiterpene lactones. Catalyzes three consecutive oxidations of germacrene A to produce germacrene A acid. Could also catalyze the three-step oxidation of non-natural substrate amorphadiene to artemisinic acid. Can use beta-elemene as substrate. The protein is Germacrene A hydroxylase of Cichorium intybus (Chicory).